Here is a 335-residue protein sequence, read N- to C-terminus: Abasic site processing protein HMCES (335 aa).

The active-site Nucleophile is Cys-2. Residue Cys-2 is modified to Thiazolidine linkage to a ring-opened DNA abasic site. The segment covering 24–39 has biased composition (basic and acidic residues); sequence QGGRKWPNWRDGDSDK. The interval 24 to 51 is disordered; it reads QGGRKWPNWRDGDSDKYQPSYNKSPQSN. The segment covering 40–51 has biased composition (polar residues); that stretch reads YQPSYNKSPQSN. Residue Glu-129 is part of the active site. The disordered stretch occupies residues 284 to 335; it reads LQNKSPKKEESHSIQSPKLSQFGAPPKKTSAGLMQQWLKKEDGEPSPKRAKK. The span at 321 to 335 shows a compositional bias: basic and acidic residues; it reads LKKEDGEPSPKRAKK.

It belongs to the SOS response-associated peptidase family. In terms of processing, ubiquitination of the hmces DNA-protein cross-link by rfwd3 may promotes its degradation.

Its subcellular location is the chromosome. With respect to regulation, formation and reversal of DNA-protein cross-link depends on DNA context. Catalyzes formation of the thiazolidine linkage in presence of abasic sites in single-stranded DNA. Mediates the reversal of the thiazolidine cross-link in presence of double stranded DNA. Its function is as follows. Sensor of abasic sites in single-stranded DNA (ssDNA) required to preserve genome integrity by promoting error-free repair of abasic sites. Acts as an enzyme that recognizes and binds abasic sites in ssDNA at replication forks and chemically modifies the lesion by forming a covalent cross-link with DNA: forms a stable thiazolidine linkage between a ring-opened abasic site and the alpha-amino and sulfhydryl substituents of its N-terminal catalytic cysteine residue. The hmces DNA-protein cross-link is then either reversed or degraded. Hmces is able to catalyze the reversal of its thiazolidine cross-link and cycle between a cross-link and a non-cross-linked state depending on DNA context: mediates self-reversal of the thiazolidine cross-link in double stranded DNA, allowing apex1 to initiate downstream repair of abasic sites. The hmces DNA-protein cross-link can also be degraded by the sprtn metalloprotease following unfolding by the brip1/fancj helicase. Promotes error-free repair of abasic sites by protecting abasic sites from translesion synthesis (TLS) polymerases and endonucleases that are error-prone and would generate mutations and double-strand breaks. Acts as a protease: mediates autocatalytic processing of its N-terminal methionine in order to expose the catalytic cysteine. The hmces DNA-protein cross-link is then either reversed or degraded. According to a model, the HMCES DNA-protein cross-link. The chain is Abasic site processing protein HMCES from Xenopus tropicalis (Western clawed frog).